A 267-amino-acid chain; its full sequence is 4-hydroxy-tetrahydrodipicolinate reductase (267 aa).

NAD(+) is bound by residues 8–13 and aspartate 34; that span reads GAAGRM. NADP(+) is bound at residue arginine 35. Residues 98 to 100 and 122 to 125 contribute to the NAD(+) site; these read GTT and AANF. Histidine 155 serves as the catalytic Proton donor/acceptor. Residue histidine 156 coordinates (S)-2,3,4,5-tetrahydrodipicolinate. The active-site Proton donor is the lysine 159. Position 165–166 (165–166) interacts with (S)-2,3,4,5-tetrahydrodipicolinate; the sequence is GT.

Belongs to the DapB family.

Its subcellular location is the cytoplasm. The enzyme catalyses (S)-2,3,4,5-tetrahydrodipicolinate + NAD(+) + H2O = (2S,4S)-4-hydroxy-2,3,4,5-tetrahydrodipicolinate + NADH + H(+). It catalyses the reaction (S)-2,3,4,5-tetrahydrodipicolinate + NADP(+) + H2O = (2S,4S)-4-hydroxy-2,3,4,5-tetrahydrodipicolinate + NADPH + H(+). It participates in amino-acid biosynthesis; L-lysine biosynthesis via DAP pathway; (S)-tetrahydrodipicolinate from L-aspartate: step 4/4. In terms of biological role, catalyzes the conversion of 4-hydroxy-tetrahydrodipicolinate (HTPA) to tetrahydrodipicolinate. The protein is 4-hydroxy-tetrahydrodipicolinate reductase of Pseudomonas putida (strain W619).